The sequence spans 125 residues: Small ribosomal subunit protein uS13 (125 aa).

The interval Gly-95–Lys-125 is disordered.

It belongs to the universal ribosomal protein uS13 family. In terms of assembly, part of the 30S ribosomal subunit. Forms a loose heterodimer with protein S19. Forms two bridges to the 50S subunit in the 70S ribosome.

Located at the top of the head of the 30S subunit, it contacts several helices of the 16S rRNA. In the 70S ribosome it contacts the 23S rRNA (bridge B1a) and protein L5 of the 50S subunit (bridge B1b), connecting the 2 subunits; these bridges are implicated in subunit movement. Contacts the tRNAs in the A and P-sites. The sequence is that of Small ribosomal subunit protein uS13 from Borreliella burgdorferi (strain ATCC 35210 / DSM 4680 / CIP 102532 / B31) (Borrelia burgdorferi).